The sequence spans 316 residues: Probable metal transport system membrane protein TC_0342 (316 aa).

A run of 10 helical transmembrane segments spans residues 1–21 (MFAS…IVFF), 39–59 (IQVI…TFLV), 64–84 (AMYA…ACLF), 94–114 (QNLT…IHFI), 124–144 (ASTA…LVFL), 171–191 (FLVL…FICV), 196–216 (VFAF…MFLL), 226–246 (AVGV…AKLI), 252–272 (EMMG…PALS), and 286–306 (SGLA…TVFV).

Belongs to the ABC-3 integral membrane protein family.

It is found in the cell inner membrane. Functionally, part of an ATP-driven transport system TC_0338/TC_0339/TC_0341/TC_0342 for a metal. The polypeptide is Probable metal transport system membrane protein TC_0342 (Chlamydia muridarum (strain MoPn / Nigg)).